The following is a 407-amino-acid chain: uncharacterized protein (407 aa).

Belongs to the peptidase U32 family.

This is an uncharacterized protein from Methanocaldococcus jannaschii (strain ATCC 43067 / DSM 2661 / JAL-1 / JCM 10045 / NBRC 100440) (Methanococcus jannaschii).